The following is a 689-amino-acid chain: Elongation factor G (689 aa).

The 275-residue stretch at Glu-8–Leu-282 folds into the tr-type G domain. GTP is bound by residues Ala-17 to Thr-24, Asp-81 to His-85, and Asn-135 to Asp-138.

This sequence belongs to the TRAFAC class translation factor GTPase superfamily. Classic translation factor GTPase family. EF-G/EF-2 subfamily.

Its subcellular location is the cytoplasm. Its function is as follows. Catalyzes the GTP-dependent ribosomal translocation step during translation elongation. During this step, the ribosome changes from the pre-translocational (PRE) to the post-translocational (POST) state as the newly formed A-site-bound peptidyl-tRNA and P-site-bound deacylated tRNA move to the P and E sites, respectively. Catalyzes the coordinated movement of the two tRNA molecules, the mRNA and conformational changes in the ribosome. The polypeptide is Elongation factor G (Alkaliphilus metalliredigens (strain QYMF)).